A 198-amino-acid chain; its full sequence is NADH-quinone oxidoreductase subunit B (198 aa).

The span at 1–20 shows a compositional bias: polar residues; that stretch reads MGLNPTQVSTSGSPQVSQPA. A disordered region spans residues 1–29; that stretch reads MGLNPTQVSTSGSPQVSQPATGVLDPRTG. [4Fe-4S] cluster is bound by residues Cys-77, Cys-78, Cys-142, and Cys-172.

This sequence belongs to the complex I 20 kDa subunit family. NDH-1 is composed of 14 different subunits. Subunits NuoB, C, D, E, F, and G constitute the peripheral sector of the complex. [4Fe-4S] cluster is required as a cofactor.

It localises to the cell inner membrane. The catalysed reaction is a quinone + NADH + 5 H(+)(in) = a quinol + NAD(+) + 4 H(+)(out). In terms of biological role, NDH-1 shuttles electrons from NADH, via FMN and iron-sulfur (Fe-S) centers, to quinones in the respiratory chain. The immediate electron acceptor for the enzyme in this species is believed to be ubiquinone. Couples the redox reaction to proton translocation (for every two electrons transferred, four hydrogen ions are translocated across the cytoplasmic membrane), and thus conserves the redox energy in a proton gradient. This Afipia carboxidovorans (strain ATCC 49405 / DSM 1227 / KCTC 32145 / OM5) (Oligotropha carboxidovorans) protein is NADH-quinone oxidoreductase subunit B.